Here is a 427-residue protein sequence, read N- to C-terminus: Probable purple acid phosphatase 20 (427 aa).

A signal peptide spans 1 to 21; sequence MVKVLGLVAILLIVLAGNVLS. N-linked (GlcNAc...) asparagine glycosylation occurs at N85. Fe cation-binding residues include D147, D174, and Y177. D174 contributes to the Zn(2+) binding site. N207 and H291 together coordinate Zn(2+). N207 contacts substrate. H301 (proton donor) is an active-site residue. H330 is a binding site for Zn(2+). 330-332 serves as a coordination point for substrate; it reads HVH. H332 provides a ligand contact to Fe cation. Residue N392 is glycosylated (N-linked (GlcNAc...) asparagine).

It belongs to the metallophosphoesterase superfamily. Purple acid phosphatase family. In terms of assembly, homodimer. It depends on Fe cation as a cofactor. The cofactor is Zn(2+). In terms of tissue distribution, expressed flowers and siliques.

The protein localises to the secreted. The enzyme catalyses a phosphate monoester + H2O = an alcohol + phosphate. This Arabidopsis thaliana (Mouse-ear cress) protein is Probable purple acid phosphatase 20 (PAP20).